The following is a 155-amino-acid chain: Large ribosomal subunit protein eL24 (155 aa).

The disordered stretch occupies residues 92-155 (AKRNMKPEVR…KAAPRVGGKR (64 aa)). Residues 96-117 (MKPEVRKAQREQAIKQAKEQKK) show a composition bias toward basic and acidic residues. Positions 124-133 (KTTAPPTKGK) are enriched in low complexity.

Belongs to the eukaryotic ribosomal protein eL24 family.

In Plutella xylostella (Diamondback moth), this protein is Large ribosomal subunit protein eL24 (RpL24).